The following is a 72-amino-acid chain: Teretoxin Tan11.1 (72 aa).

An N-terminal signal peptide occupies residues 1 to 21; that stretch reads MLATKMSVTFCFLLMLTTVML. A propeptide spanning residues 22–31 is cleaved from the precursor; it reads PTEAKTVAGR.

This sequence belongs to the teretoxin H (TH) superfamily. Contains 4 disulfide bonds. Expressed by the venom duct.

It localises to the secreted. This is Teretoxin Tan11.1 from Terebra anilis (Auger snail).